A 180-amino-acid chain; its full sequence is Virion protein US10 homolog (180 aa).

Belongs to the herpesviridae US10 family. In terms of processing, phosphorylated.

It localises to the virion tegument. Its subcellular location is the host nucleus matrix. This chain is Virion protein US10 homolog (64), found in Varicella-zoster virus (strain Dumas) (HHV-3).